Consider the following 116-residue polypeptide: MEIPENIQHQLNQFQQLQQQAQAVTMQIQNVEVQIQESETALEELNKTDENAEVFKQAGNLLIKVDYAQAVEDMNEKLETLKLRKQTMARQEERVMKKLEEMQTNIQAAMQGLQGE.

The protein belongs to the prefoldin subunit beta family. As to quaternary structure, heterohexamer of two alpha and four beta subunits.

Its subcellular location is the cytoplasm. Functionally, molecular chaperone capable of stabilizing a range of proteins. Seems to fulfill an ATP-independent, HSP70-like function in archaeal de novo protein folding. In Methanobrevibacter smithii (strain ATCC 35061 / DSM 861 / OCM 144 / PS), this protein is Prefoldin subunit beta.